We begin with the raw amino-acid sequence, 323 residues long: Mitochondrial glutamate carrier 1 (323 aa).

Solcar repeat units lie at residues 6 to 93, 101 to 214, and 223 to 312; these read ISLP…FRHQ, LTLL…LNQL, and SPFY…GIAE. The next 6 helical transmembrane spans lie at 12-32, 62-82, 107-127, 189-209, 223-243, and 292-312; these read LINGGIAGLIGVTCVFPIDLA, YFGMYRGAAVNLTLVTPEKAI, MLAGCGAGTCQVIVTTPMEML, GLGATLLRDVPFSVVYFPLFA, SPFYVSFLAGCVAGSAAAVAV, and ALVIAPLFGIAQVVYFLGIAE.

It belongs to the mitochondrial carrier (TC 2.A.29) family. In terms of tissue distribution, expressed at high levels in brain, liver, and pancreas.

Its subcellular location is the mitochondrion inner membrane. It carries out the reaction L-glutamate(in) + H(+)(in) = L-glutamate(out) + H(+)(out). Mitochondrial glutamate/H(+) symporter. Responsible for the transport of glutamate from the cytosol into the mitochondrial matrix with the concomitant import of a proton. Plays a role in the control of glucose-stimulated insulin secretion. The polypeptide is Mitochondrial glutamate carrier 1 (Homo sapiens (Human)).